Consider the following 410-residue polypeptide: Tryptophan synthase beta chain (410 aa).

The residue at position 99 (lysine 99) is an N6-(pyridoxal phosphate)lysine.

The protein belongs to the TrpB family. Tetramer of two alpha and two beta chains. The cofactor is pyridoxal 5'-phosphate.

The catalysed reaction is (1S,2R)-1-C-(indol-3-yl)glycerol 3-phosphate + L-serine = D-glyceraldehyde 3-phosphate + L-tryptophan + H2O. It functions in the pathway amino-acid biosynthesis; L-tryptophan biosynthesis; L-tryptophan from chorismate: step 5/5. Functionally, the beta subunit is responsible for the synthesis of L-tryptophan from indole and L-serine. This Pseudomonas fluorescens (strain Pf0-1) protein is Tryptophan synthase beta chain.